An 88-amino-acid polypeptide reads, in one-letter code: Small ribosomal subunit protein uS19 (88 aa).

Belongs to the universal ribosomal protein uS19 family.

Functionally, protein S19 forms a complex with S13 that binds strongly to the 16S ribosomal RNA. In Chlamydia abortus (strain DSM 27085 / S26/3) (Chlamydophila abortus), this protein is Small ribosomal subunit protein uS19.